Consider the following 118-residue polypeptide: cAMP-responsive element-binding protein-like 2 (118 aa).

The disordered stretch occupies residues Met1–Asp25. Over residues Lys10–Pro21 the composition is skewed to basic residues. Residues Lys23–Ser86 enclose the bZIP domain. Residues Lys29–Arg60 are basic motif. The tract at residues Ile62–Leu69 is leucine-zipper.

This sequence belongs to the bZIP family. ATF subfamily.

Its subcellular location is the nucleus. Functionally, probable regulator of creb1 transcriptional activity which is involved in adipose cells differentiation. May also play a regulatory role in the cell cycle. This chain is cAMP-responsive element-binding protein-like 2 (crebl2), found in Xenopus tropicalis (Western clawed frog).